The chain runs to 711 residues: MLKLPPRFFSVYSTLIHILASFLCSSDVRGDFPATRFDLGTLTLSSLKLLGDAHLNNGTIKLTRELSVPTSTAGKALYGKPVKFRHPETKSPASFTTYFSFSVTNLNPSSIGGGLAFVISPDEDYLGSTGGFLGLTEETGSGSGFVAVEFDTLMDVQFKDVNGNHVGLDLNAVVSAAVADLGNVDIDLKSGNAVNSWITYDGSGRVLTVYVSYSNLKPKSPILSVPLDLDRYVSDSMFVGFSGSTQGSTEIHSVDWWSFSSSFEESSESPPPMPNSPPPSSPSSSITPSLSTVRRKTADPSSSCRNKLCKKSPAAVAGVVTAGAFFLALFAGVIIWVYSKKIKYTRKSESLASEIMKSPREFTYKELKLATDCFSSSRVIGNGAFGTVYKGILQDSGEIIAIKRCSHISQGNTEFLSELSLIGTLRHRNLLRLQGYCREKGEILLIYDLMPNGSLDKALYESPTTLPWPHRRKILLGVASALAYLHQECENQIIHRDVKTSNIMLDANFNPKLGDFGLARQTEHDKSPDATAAAGTMGYLAPEYLLTGRATEKTDVFSYGAVVLEVCTGRRPITRPEPEPGLRPGLRSSLVDWVWGLYREGKLLTAVDERLSEFNPEEMSRVMMVGLACSQPDPVTRPTMRSVVQILVGEADVPEVPIAKPSSSMSFSTSELLLTLQDSVSDCNEVLAPISTTSCSSSEHDIFIVGKDRSV.

The N-terminal stretch at 1 to 30 (MLKLPPRFFSVYSTLIHILASFLCSSDVRG) is a signal peptide. At 31-315 (DFPATRFDLG…NKLCKKSPAA (285 aa)) the chain is on the extracellular side. Positions 35 to 260 (TRFDLGTLTL…IHSVDWWSFS (226 aa)) are legume-lectin like. The N-linked (GlcNAc...) asparagine glycan is linked to Asn-57. A disordered region spans residues 265–306 (ESSESPPPMPNSPPPSSPSSSITPSLSTVRRKTADPSSSCRN). Over residues 269–281 (SPPPMPNSPPPSS) the composition is skewed to pro residues. The segment covering 282 to 291 (PSSSITPSLS) has biased composition (low complexity). Residues 316 to 336 (VAGVVTAGAFFLALFAGVIIW) form a helical membrane-spanning segment. Topologically, residues 337-711 (VYSKKIKYTR…IFIVGKDRSV (375 aa)) are cytoplasmic. The Protein kinase domain occupies 374-656 (FSSSRVIGNG…LVGEADVPEV (283 aa)). ATP contacts are provided by residues 380–388 (IGNGAFGTV) and Lys-403. The Proton acceptor role is filled by Asp-497.

In the C-terminal section; belongs to the protein kinase superfamily. Ser/Thr protein kinase family. This sequence in the N-terminal section; belongs to the leguminous lectin family.

Its subcellular location is the cell membrane. It carries out the reaction L-seryl-[protein] + ATP = O-phospho-L-seryl-[protein] + ADP + H(+). The enzyme catalyses L-threonyl-[protein] + ATP = O-phospho-L-threonyl-[protein] + ADP + H(+). In terms of biological role, involved in resistance response to the pathogenic oomycetes Phytophthora infestans and Phytophthora capsici. The polypeptide is L-type lectin-domain containing receptor kinase VIII.2 (Arabidopsis thaliana (Mouse-ear cress)).